Consider the following 387-residue polypeptide: Putative glutamate--cysteine ligase 2 (387 aa).

The protein belongs to the glutamate--cysteine ligase type 2 family. YbdK subfamily.

The enzyme catalyses L-cysteine + L-glutamate + ATP = gamma-L-glutamyl-L-cysteine + ADP + phosphate + H(+). In terms of biological role, ATP-dependent carboxylate-amine ligase which exhibits weak glutamate--cysteine ligase activity. This is Putative glutamate--cysteine ligase 2 from Trichormus variabilis (strain ATCC 29413 / PCC 7937) (Anabaena variabilis).